An 82-amino-acid polypeptide reads, in one-letter code: MLADELTIGPIRAVPMDITPKYVGIASGLMNAGSAVADIISPIAFGIIIDKTGNWSLPFYGSVALLVIGIFLTFFMRPDKSL.

2 helical membrane-spanning segments follow: residues 29–49 (LMNA…GIII) and 55–75 (WSLP…LTFF).

It localises to the cell membrane. This is an uncharacterized protein from Escherichia coli (strain K12).